The following is a 141-amino-acid chain: Large ribosomal subunit protein uL11 (141 aa).

The protein belongs to the universal ribosomal protein uL11 family. As to quaternary structure, part of the ribosomal stalk of the 50S ribosomal subunit. Interacts with L10 and the large rRNA to form the base of the stalk. L10 forms an elongated spine to which L12 dimers bind in a sequential fashion forming a multimeric L10(L12)X complex. In terms of processing, one or more lysine residues are methylated.

In terms of biological role, forms part of the ribosomal stalk which helps the ribosome interact with GTP-bound translation factors. The protein is Large ribosomal subunit protein uL11 of Clostridium botulinum (strain Alaska E43 / Type E3).